Here is an 88-residue protein sequence, read N- to C-terminus: Small ribosomal subunit protein bS20 (88 aa).

Residues Met1–Asn21 show a composition bias toward basic residues. Positions Met1–Ser26 are disordered.

The protein belongs to the bacterial ribosomal protein bS20 family.

Functionally, binds directly to 16S ribosomal RNA. This chain is Small ribosomal subunit protein bS20, found in Shewanella halifaxensis (strain HAW-EB4).